A 65-amino-acid polypeptide reads, in one-letter code: Small ribosomal subunit protein eS17 (65 aa).

It belongs to the eukaryotic ribosomal protein eS17 family.

This is Small ribosomal subunit protein eS17 from Archaeoglobus fulgidus (strain ATCC 49558 / DSM 4304 / JCM 9628 / NBRC 100126 / VC-16).